A 424-amino-acid polypeptide reads, in one-letter code: 26S proteasome regulatory subunit 6A homolog A (424 aa).

The interval 1 to 21 (MATPMVEDTSSFEEDQLASMS) is disordered. Residue A2 is modified to N-acetylalanine. S19 carries the post-translational modification Phosphoserine. Residue 212 to 219 (GPPGTGKT) participates in ATP binding. K235 participates in a covalent cross-link: Glycyl lysine isopeptide (Lys-Gly) (interchain with G-Cter in ubiquitin). T278 is subject to O-acetylthreonine. Residues K279 and K416 each participate in a glycyl lysine isopeptide (Lys-Gly) (interchain with G-Cter in ubiquitin) cross-link.

It belongs to the AAA ATPase family. In terms of assembly, component of the 19S regulatory particle (RP/PA700) base subcomplex of the 26S proteasome. The 26S proteasome is composed of a core protease (CP), known as the 20S proteasome, capped at one or both ends by the 19S regulatory particle (RP/PA700). The RP/PA700 complex is composed of at least 17 different subunits in two subcomplexes, the base and the lid, which form the portions proximal and distal to the 20S proteolytic core, respectively. Ubiquitous.

It localises to the cytoplasm. The protein localises to the nucleus. In terms of biological role, the 26S proteasome is involved in the ATP-dependent degradation of ubiquitinated proteins. The regulatory (or ATPase) complex confers ATP dependency and substrate specificity to the 26S complex. Interacts with transit peptides of proteins targeted to the chloroplast, and may be involved in the degradation of unimported plastid protein precursors. Plays a essential role in the gametophyte development. Involved in tolerance to zinc deficiency, possibly through alleviation of oxidative stresses or processing of poly-ubiquitinated proteins. The polypeptide is 26S proteasome regulatory subunit 6A homolog A (Arabidopsis thaliana (Mouse-ear cress)).